Consider the following 387-residue polypeptide: 1-deoxy-D-xylulose 5-phosphate reductoisomerase (387 aa).

6 residues coordinate NADPH: T10, G11, S12, V13, N38, and N119. Residue K120 coordinates 1-deoxy-D-xylulose 5-phosphate. E121 is a binding site for NADPH. D145 is a Mn(2+) binding site. Residues S146, E147, S170, and H193 each coordinate 1-deoxy-D-xylulose 5-phosphate. E147 provides a ligand contact to Mn(2+). G199 is a binding site for NADPH. 1-deoxy-D-xylulose 5-phosphate is bound by residues S206, N211, K212, and E215. Position 215 (E215) interacts with Mn(2+).

This sequence belongs to the DXR family. The cofactor is Mg(2+). It depends on Mn(2+) as a cofactor.

The enzyme catalyses 2-C-methyl-D-erythritol 4-phosphate + NADP(+) = 1-deoxy-D-xylulose 5-phosphate + NADPH + H(+). It participates in isoprenoid biosynthesis; isopentenyl diphosphate biosynthesis via DXP pathway; isopentenyl diphosphate from 1-deoxy-D-xylulose 5-phosphate: step 1/6. Catalyzes the NADPH-dependent rearrangement and reduction of 1-deoxy-D-xylulose-5-phosphate (DXP) to 2-C-methyl-D-erythritol 4-phosphate (MEP). The protein is 1-deoxy-D-xylulose 5-phosphate reductoisomerase of Wolbachia sp. subsp. Drosophila simulans (strain wRi).